Reading from the N-terminus, the 1009-residue chain is Protein WBSCR14 homolog (1009 aa).

4 disordered regions span residues 1–20 (MSRGQIIHSGHFMCSNPHDD), 304–354 (MSLG…LHQM), 488–531 (NNQP…DPMM), and 686–728 (ILES…EQEA). 2 stretches are compositionally biased toward polar residues: residues 324-350 (RTPTNDQPSISAQQIPQMRRSASSSAS) and 499-508 (RSNLLPTQND). A compositionally biased stretch (low complexity) spans 511 to 526 (LPQFLQSTQPTPQPQS). Over residues 686–695 (ILESPSTSGD) the composition is skewed to polar residues. Residues 803-856 (RKRILHLHAEQNRRSALKDGFDQLMDIIPDLYSGGVKPTNAVVLAKSADHIRRL) form the bHLH domain. A leucine-zipper region spans residues 856-877 (LQAEKWDKTQKIDEAKAKIEKL).

Expressed in intestine, neurons, muscle, hypodermis, excretory cell and other tissues.

It is found in the nucleus. The protein resides in the cytoplasm. Its subcellular location is the mitochondrion. Its function is as follows. Transcription factor that binds to the E box motif 5'-CACGTG-3', probably in a heterodimeric complex with mxl-2. Involved in modulating longevity in response to TOR signaling, dietary restriction, the decline in protein homeostasis associated with normal aging, germline signaling and the insulin-like signaling pathway. Plays a role in autophagy. Involved in regulating migration of the ray 1 precursor cells in the male tail, acting in concert with Wnt and semaphorin signaling pathways. Regulates transcription of genes encoding extracellular matrix (ECM) components which may contribute to the substratum required for migration of the neighboring ray 1 precursor cells. Involved in repressing infection by the microsporidian pathogen N.parisii, probably acting independently of its canonical partner, mxl-2. This chain is Protein WBSCR14 homolog (mml-1), found in Caenorhabditis elegans.